We begin with the raw amino-acid sequence, 144 residues long: F420-non-reducing hydrogenase vhc iron-sulfur subunit D (144 aa).

This sequence belongs to the MvhD/VhuD family. As to quaternary structure, the F420-non-reducing hydrogenase vhc is composed of three subunits; VhcA, VhcD and VhcG. [2Fe-2S] cluster serves as cofactor.

The chain is F420-non-reducing hydrogenase vhc iron-sulfur subunit D (vhcD) from Methanococcus voltae.